A 244-amino-acid chain; its full sequence is Chaperone protein FimB/FhaD (244 aa).

The signal sequence occupies residues 1–24; that stretch reads MARWRRRLGVAALGAAMLASLAPA.

It belongs to the periplasmic pilus chaperone family.

Its subcellular location is the periplasm. In terms of biological role, required for the biogenesis of the filamentous hemagglutinin and the fimbria. This is Chaperone protein FimB/FhaD (fimB) from Bordetella pertussis (strain Tohama I / ATCC BAA-589 / NCTC 13251).